A 395-amino-acid polypeptide reads, in one-letter code: MATFTDAEIDDLFETSGTIIDSIITAQGKPVETVGRSAIPQGKTKALSAAWEKHESIQPPASQDTPDRQNRSDKQPSTPEQMTPQNSPPATSTDQPPTQAAGEAGDTQLKTGASNSLLSMLDKLSNKSSNAKKGPWSSLQEGHHQLPTQQQGSQPSRGNSQERPQNRANAAPGDRGTDANTAYHGQWEESQLSAGATPHALRSGQSQDNTPASVDHVQLPVDFVQAMMSMMEAISQRVSKVDYQLDLILKQTSSIPMMRSEIQQLKTSVAVMEANLGMMKILDPGCANVSSLSDLRAVARSHPVLVSGPGDPSPYVTQGGEMTLNKLSQPVQHPSELIKPATVGGPDIGVEKDTVRALITSRPMHPSSSAKLLSKLDAAGSIEEIRKIKRLAVNG.

Disordered regions lie at residues 31 to 109 (VETV…DTQL) and 126 to 214 (NKSS…PASV). The segment covering 65–74 (TPDRQNRSDK) has biased composition (basic and acidic residues). Polar residues-rich tracts occupy residues 75-98 (QPSTPEQMTPQNSPPATSTDQPPT), 146-168 (LPTQQQGSQPSRGNSQERPQNRA), and 203-212 (SGQSQDNTPA). Residues 222–285 (DFVQAMMSMM…LGMMKILDPG (64 aa)) form a multimerization region.

It belongs to the rubulavirus/avulavirus P protein family. As to quaternary structure, homotetramer. Interacts (via multimerization domain) with polymerase L; this interaction forms the polymerase L-P complex. Interacts (via N-terminus) with N0 (via Ncore); this interaction allows P to chaperon N0 to avoid N polymerization before encapsidation. Interacts (via C-terminus) with N-RNA template; this interaction positions the polymerase on the template for both transcription and replication.

In terms of biological role, essential cofactor of the RNA polymerase L that plays a central role in the transcription and replication by forming the polymerase complex with RNA polymerase L and recruiting L to the genomic N-RNA template for RNA synthesis. Also plays a central role in the encapsidation of nascent RNA chains by forming the encapsidation complex with the nucleocapsid protein N (N-P complex). Acts as a chaperone for newly synthesized free N protein, so-called N0, allowing encapsidation of nascent RNA chains during replication. The nucleoprotein protein N prevents excessive phosphorylation of P, which leads to down-regulation of viral transcription/ replication. Participates, together with N, in the formation of viral factories (viroplasms), which are large inclusions in the host cytoplasm where replication takes place. The polypeptide is Phosphoprotein (P/C) (Gallus gallus (Chicken)).